The primary structure comprises 257 residues: 1-(5-phosphoribosyl)-5-[(5-phosphoribosylamino)methylideneamino] imidazole-4-carboxamide isomerase (257 aa).

D8 functions as the Proton acceptor in the catalytic mechanism. D129 functions as the Proton donor in the catalytic mechanism.

Belongs to the HisA/HisF family.

The protein localises to the cytoplasm. It carries out the reaction 1-(5-phospho-beta-D-ribosyl)-5-[(5-phospho-beta-D-ribosylamino)methylideneamino]imidazole-4-carboxamide = 5-[(5-phospho-1-deoxy-D-ribulos-1-ylimino)methylamino]-1-(5-phospho-beta-D-ribosyl)imidazole-4-carboxamide. The protein operates within amino-acid biosynthesis; L-histidine biosynthesis; L-histidine from 5-phospho-alpha-D-ribose 1-diphosphate: step 4/9. The polypeptide is 1-(5-phosphoribosyl)-5-[(5-phosphoribosylamino)methylideneamino] imidazole-4-carboxamide isomerase (Acaryochloris marina (strain MBIC 11017)).